A 179-amino-acid polypeptide reads, in one-letter code: Diphosphoinositol polyphosphate phosphohydrolase 2 (179 aa).

Residues arginine 9, 17–19, and 38–40 contribute to the substrate site; these read KKR and SSR. A Nudix hydrolase domain is found at 17-143; the sequence is KKRAACLCFR…VHAEYLEKLK (127 aa). Residues glycine 49 and glutamate 65 each coordinate Mg(2+). A Nudix box motif is present at residues 50–71; that stretch reads GGMEPEEEPGGAAVREVYEEAG. Glutamate 68 serves as the catalytic Proton acceptor. Glutamate 69 lines the Mg(2+) pocket. Substrate is bound by residues 88–90, arginine 114, and lysine 132; that span reads RKH.

The protein belongs to the Nudix hydrolase family. DIPP subfamily. Mg(2+) serves as cofactor. Mn(2+) is required as a cofactor.

It is found in the cytoplasm. It carries out the reaction diphospho-myo-inositol polyphosphate + H2O = myo-inositol polyphosphate + phosphate.. The catalysed reaction is 5-diphospho-1D-myo-inositol 1,2,3,4,6-pentakisphosphate + H2O = 1D-myo-inositol hexakisphosphate + phosphate + H(+). It catalyses the reaction 3,5-bis(diphospho)-1D-myo-inositol 1,2,4,6-tetrakisphosphate + H2O = 3-diphospho-1D-myo-inositol 1,2,4,5,6-pentakisphosphate + phosphate + 2 H(+). The enzyme catalyses 5-diphospho-1D-myo-inositol 1,3,4,6-tetrakisphosphate + H2O = 1D-myo-inositol 1,3,4,5,6-pentakisphosphate + phosphate + H(+). It carries out the reaction P(1),P(6)-bis(5'-adenosyl) hexaphosphate + H2O = 2 ATP + 2 H(+). The catalysed reaction is P(1),P(5)-bis(5'-adenosyl) pentaphosphate + H2O = ADP + ATP + 2 H(+). It catalyses the reaction 5-phospho-alpha-D-ribose 1-diphosphate + H2O = alpha-D-ribose 1,5-bisphosphate + phosphate + H(+). Functionally, cleaves the beta-phosphate from diphosphoinositol polyphosphates such as PP-InsP5 (diphosphoinositol pentakisphosphate), PP-InsP4 (diphosphoinositol tetrakisphosphate) and [PP]2-InsP4 (bisdiphosphoinositol tetrakisphosphate), suggesting that it may play a role in signal transduction. Diadenosine polyphosphates, particularly Ap6A (P(1),P(6)-bis(5a-adenosyl) hexaphosphate) and Ap5A (P(1),P(5)-bis(5'-adenosyl) pentaphosphate) are downstream effectors of a signaling cascade that regulates cardiac KATP channels, can also be substrates, although with lower preference than the diphosphoinositol polyphosphates. Can also catalyze the hydrolysis of 5-phosphoribose 1-diphosphate, generating the glycolytic activator ribose 1,5-bisphosphate. Does not play a role in U8 snoRNA decapping activity. Binds U8 snoRNA. This is Diphosphoinositol polyphosphate phosphohydrolase 2 from Mus musculus (Mouse).